A 394-amino-acid chain; its full sequence is Putative bacilysin exporter BacE (394 aa).

11 consecutive transmembrane segments (helical) span residues 11–31 (LLYGQALSFMGDYCVLPALLI), 43–63 (SGVIVVRSIPMVFQPFLGVLV), 69–89 (IKIMLWTDIIRGIIFLGLTFL), 92–112 (GEYPLIFLALLFITYGSGVFF), 142–162 (IIVGAAAGGLFLLGGSVELAV), 166–186 (GVTYLVSAFFISRIKLQFVPI), 215–235 (MFTMITMALLWGVVYSYFPIV), 244–264 (IGNFILTFCIGFGGFIGAALV), 288–308 (LFLFTPIFAVSVIAAILFFIA), 332–352 (IFSVAEASIGLCISIGSMFIN), and 353–373 (ILSAPVIMGLIVVIVCGLFLH).

Belongs to the major facilitator superfamily. Drug:H(+) antiporter-3 (DHA3) (TC 2.A.1.21) family.

The protein resides in the cell membrane. Part of the bacilysin biosynthesis operon. May be involved in self-resistance to bacilysin by permitting efflux of this antibiotic. The chain is Putative bacilysin exporter BacE (bacE) from Bacillus subtilis (strain 168).